The chain runs to 444 residues: Methylenetetrahydrofolate--tRNA-(uracil-5-)-methyltransferase TrmFO (444 aa).

10–15 (GAGLAG) lines the FAD pocket.

This sequence belongs to the MnmG family. TrmFO subfamily. The cofactor is FAD.

Its subcellular location is the cytoplasm. The enzyme catalyses uridine(54) in tRNA + (6R)-5,10-methylene-5,6,7,8-tetrahydrofolate + NADH + H(+) = 5-methyluridine(54) in tRNA + (6S)-5,6,7,8-tetrahydrofolate + NAD(+). The catalysed reaction is uridine(54) in tRNA + (6R)-5,10-methylene-5,6,7,8-tetrahydrofolate + NADPH + H(+) = 5-methyluridine(54) in tRNA + (6S)-5,6,7,8-tetrahydrofolate + NADP(+). Its function is as follows. Catalyzes the folate-dependent formation of 5-methyl-uridine at position 54 (M-5-U54) in all tRNAs. This Streptococcus suis (strain 98HAH33) protein is Methylenetetrahydrofolate--tRNA-(uracil-5-)-methyltransferase TrmFO.